Reading from the N-terminus, the 147-residue chain is Large ribosomal subunit protein bL9 (147 aa).

It belongs to the bacterial ribosomal protein bL9 family.

In terms of biological role, binds to the 23S rRNA. The protein is Large ribosomal subunit protein bL9 of Campylobacter lari (strain RM2100 / D67 / ATCC BAA-1060).